Here is a 440-residue protein sequence, read N- to C-terminus: Transposon TyH3 Gag polyprotein (440 aa).

3 stretches are compositionally biased toward polar residues: residues 1–23 (MESQQLSQHSPNSHGSACASVTS), 48–60 (TKANSQQTTTPAS), and 127–152 (QSQFPQYPSSVGTPLSTPSPESGNTF). 3 disordered regions span residues 1-93 (MESQ…MMTQ), 126-173 (PQSQ…RPPP), and 352-440 (GSRN…PETY). Residues 153–165 (TDSSSADSDMTST) show a composition bias toward low complexity. The interval 299-401 (NNGIHINNKV…NSKSKTARAH (103 aa)) is RNA-binding. The segment covering 402–418 (NVSTSNNSPSTDNDSIS) has biased composition (low complexity). Serine 416 is subject to Phosphoserine. Polar residues predominate over residues 419-428 (KSTTEPIQLN). The segment covering 429-440 (NKHDLHLRPETY) has biased composition (basic and acidic residues).

Homotrimer.

The protein resides in the cytoplasm. Capsid protein (CA) is the structural component of the virus-like particle (VLP), forming the shell that encapsulates the retrotransposons dimeric RNA genome. The particles are assembled from trimer-clustered units and there are holes in the capsid shells that allow for the diffusion of macromolecules. CA also has nucleocapsid-like chaperone activity, promoting primer tRNA(i)-Met annealing to the multipartite primer-binding site (PBS), dimerization of Ty1 RNA and initiation of reverse transcription. The protein is Transposon TyH3 Gag polyprotein (TY1A) of Saccharomyces cerevisiae (Baker's yeast).